We begin with the raw amino-acid sequence, 798 residues long: Glycogen phosphorylase (798 aa).

N6-(pyridoxal phosphate)lysine is present on Lys-646.

The protein belongs to the glycogen phosphorylase family. Requires pyridoxal 5'-phosphate as cofactor.

It catalyses the reaction [(1-&gt;4)-alpha-D-glucosyl](n) + phosphate = [(1-&gt;4)-alpha-D-glucosyl](n-1) + alpha-D-glucose 1-phosphate. Its function is as follows. Phosphorylase is an important allosteric enzyme in carbohydrate metabolism. Enzymes from different sources differ in their regulatory mechanisms and in their natural substrates. However, all known phosphorylases share catalytic and structural properties. The polypeptide is Glycogen phosphorylase (glgP) (Bacillus subtilis (strain 168)).